Consider the following 353-residue polypeptide: Protein AC18 (353 aa).

The protein localises to the host nucleus. It is found in the host cytoplasm. May play a role in occlusion-derived virions (ODV) formation and/or regulation of late viral gene expression. The protein is Protein AC18 (DA41) of Autographa californica nuclear polyhedrosis virus (AcMNPV).